Reading from the N-terminus, the 463-residue chain is Hydroxyacid-oxoacid transhydrogenase, mitochondrial (463 aa).

The protein belongs to the iron-containing alcohol dehydrogenase family. Hydroxyacid-oxoacid transhydrogenase subfamily.

Its subcellular location is the mitochondrion. The enzyme catalyses (S)-3-hydroxybutanoate + 2-oxoglutarate = (R)-2-hydroxyglutarate + acetoacetate. It catalyses the reaction 4-hydroxybutanoate + 2-oxoglutarate = (R)-2-hydroxyglutarate + succinate semialdehyde. In terms of biological role, catalyzes the cofactor-independent reversible oxidation of gamma-hydroxybutyrate (GHB) to succinic semialdehyde (SSA) coupled to reduction of 2-ketoglutarate (2-KG) to D-2-hydroxyglutarate (D-2-HG). L-3-hydroxybutyrate (L-3-OHB) is also a substrate for HOT when using 2-KG as hydrogen acceptor, resulting in the formation of D-2-HG. The sequence is that of Hydroxyacid-oxoacid transhydrogenase, mitochondrial (adhfe1) from Xenopus tropicalis (Western clawed frog).